The chain runs to 833 residues: Capsid-associated protein Vp91 (833 aa).

The N-terminal stretch at 1–18 (MSGVVLLVLAIILITIFS) is a signal peptide. N-linked (GlcNAc...) asparagine; by host glycans are attached at residues Asn137, Asn180, Asn199, and Asn210. The segment at 147-196 (CVPEDPCSGRPPGRYPMNELLLDTLVHNQHSDKNYSAGAHLYHPTLYLRC) adopts a C2HC BV-type zinc-finger fold. 2 disulfides stabilise this stretch: Cys207–Cys220 and Cys260–Cys273. Residues 223–281 (NELCEGRPDGFVLPYFPEALLVNEFVECRNGEHVVAQCADGQVFDRALMTCVHAHPCAF) form the Chitin-binding type-2 domain. Asn408, Asn413, Asn588, and Asn609 each carry an N-linked (GlcNAc...) asparagine; by host glycan. The segment at 647-673 (EPGGDGDHWAPEVPPTQPEPELEPESE) is disordered.

It localises to the virion. In terms of biological role, probable capsid-associated protein. This chain is Capsid-associated protein Vp91, found in Choristoneura fumiferana nuclear polyhedrosis virus (CfMNPV).